A 156-amino-acid polypeptide reads, in one-letter code: MPRKGAVAKREVLPDPIYNSKLVTRLINRLMLDGKRGTASKILYQAFDIIKEQTGNEPLDVFEEAMKNIMPVLEVKARRVGGSNYQVPIEVRPDRRTTLGLRWLVQYSRLRGEHTMSERLAKEIMDAANNTGAAVKKREDTHKMADANRAFAHYRW.

This sequence belongs to the universal ribosomal protein uS7 family. Part of the 30S ribosomal subunit. Contacts proteins S9 and S11.

One of the primary rRNA binding proteins, it binds directly to 16S rRNA where it nucleates assembly of the head domain of the 30S subunit. Is located at the subunit interface close to the decoding center, probably blocks exit of the E-site tRNA. The sequence is that of Small ribosomal subunit protein uS7 from Ligilactobacillus salivarius (strain UCC118) (Lactobacillus salivarius).